Here is a 134-residue protein sequence, read N- to C-terminus: uncharacterized protein (134 aa).

The first 23 residues, 1 to 23, serve as a signal peptide directing secretion; that stretch reads MWHLRCSNWRGSGVFGMCFSLSG. Cys-24 carries the N-palmitoyl cysteine lipid modification. A lipid anchor (S-diacylglycerol cysteine) is attached at Cys-24.

The protein localises to the cell membrane. This is an uncharacterized protein from Treponema pallidum (strain Nichols).